The following is a 445-amino-acid chain: Guanosine nucleotide diphosphate dissociation inhibitor At5g09550 (445 aa).

The protein belongs to the Rab GDI family.

In terms of biological role, regulates the GDP/GTP exchange reaction of most RAB proteins by inhibiting the dissociation of GDP from them, and the subsequent binding of GTP. This is Guanosine nucleotide diphosphate dissociation inhibitor At5g09550 from Arabidopsis thaliana (Mouse-ear cress).